The primary structure comprises 265 residues: Glutamate racemase (265 aa).

Substrate-binding positions include 7–8 (DS) and 39–40 (YG). The active-site Proton donor/acceptor is the cysteine 70. 71–72 (NT) lines the substrate pocket. The active-site Proton donor/acceptor is cysteine 177.

The protein belongs to the aspartate/glutamate racemases family.

It carries out the reaction L-glutamate = D-glutamate. It functions in the pathway cell wall biogenesis; peptidoglycan biosynthesis. In terms of biological role, provides the (R)-glutamate required for cell wall biosynthesis. The protein is Glutamate racemase of Prochlorococcus marinus (strain NATL1A).